Reading from the N-terminus, the 485-residue chain is Glycogen synthase (485 aa).

Lysine 15 serves as a coordination point for ADP-alpha-D-glucose.

It belongs to the glycosyltransferase 1 family. Bacterial/plant glycogen synthase subfamily.

The catalysed reaction is [(1-&gt;4)-alpha-D-glucosyl](n) + ADP-alpha-D-glucose = [(1-&gt;4)-alpha-D-glucosyl](n+1) + ADP + H(+). Its pathway is glycan biosynthesis; glycogen biosynthesis. In terms of biological role, synthesizes alpha-1,4-glucan chains using ADP-glucose. In Rhodospirillum rubrum (strain ATCC 11170 / ATH 1.1.1 / DSM 467 / LMG 4362 / NCIMB 8255 / S1), this protein is Glycogen synthase.